The sequence spans 789 residues: uncharacterized protein (789 aa).

5 disordered regions span residues 107–326 (YQQD…NNNN), 426–491 (MLKS…NNNN), 523–625 (SVNF…ISNN), 666–751 (THTF…KGNN), and 765–789 (PTRF…YNQH). The span at 113 to 123 (NNTDDEQEQEQ) shows a compositional bias: acidic residues. Low complexity-rich tracts occupy residues 124–141 (EQQQ…TPIK), 151–194 (TSQT…ITPI), 201–213 (SIST…LRSS), and 225–270 (TSST…THNS). Residues 274–290 (IDDDDGDNNDEINDEND) show a composition bias toward acidic residues. 2 stretches are compositionally biased toward low complexity: residues 291 to 326 (INSN…NNNN) and 429 to 491 (SNNS…NNNN). Over residues 523–549 (SVNFDRNQNQKSPFLNNTSMPNINFNE) the composition is skewed to polar residues. Low complexity-rich tracts occupy residues 550-581 (QSQQ…SINY), 602-617 (TSGS…NNSK), 696-722 (HIMN…SGSN), and 766-789 (TRFN…YNQH).

This is an uncharacterized protein from Dictyostelium discoideum (Social amoeba).